The sequence spans 365 residues: Deoxyguanosinetriphosphate triphosphohydrolase-like protein (365 aa).

The 136-residue stretch at 52 to 187 folds into the HD domain; it reads RLTHSIEVSQ…VDHADEIAYV (136 aa).

Belongs to the dGTPase family. Type 2 subfamily.

In Wolinella succinogenes (strain ATCC 29543 / DSM 1740 / CCUG 13145 / JCM 31913 / LMG 7466 / NCTC 11488 / FDC 602W) (Vibrio succinogenes), this protein is Deoxyguanosinetriphosphate triphosphohydrolase-like protein.